The following is a 128-amino-acid chain: Crossover junction endodeoxyribonuclease Hjc (128 aa).

Glu-10 provides a ligand contact to Mg(2+). Residue Ser-30 is part of the active site. Mg(2+) is bound by residues Asp-34 and Glu-47.

The protein belongs to the Holliday junction resolvase Hjc family. As to quaternary structure, homodimer. It depends on Mg(2+) as a cofactor.

It carries out the reaction Endonucleolytic cleavage at a junction such as a reciprocal single-stranded crossover between two homologous DNA duplexes (Holliday junction).. Its function is as follows. A structure-specific endonuclease that resolves Holliday junction (HJ) intermediates during genetic recombination. Cleaves 4-way DNA junctions introducing paired nicks in opposing strands, leaving a 5'-terminal phosphate and a 3'-terminal hydroxyl group that are subsequently ligated to produce recombinant products. This chain is Crossover junction endodeoxyribonuclease Hjc, found in Thermococcus kodakarensis (strain ATCC BAA-918 / JCM 12380 / KOD1) (Pyrococcus kodakaraensis (strain KOD1)).